A 352-amino-acid polypeptide reads, in one-letter code: Phosphoribosylformylglycinamidine cyclo-ligase (352 aa).

Belongs to the AIR synthase family.

The protein localises to the cytoplasm. The catalysed reaction is 2-formamido-N(1)-(5-O-phospho-beta-D-ribosyl)acetamidine + ATP = 5-amino-1-(5-phospho-beta-D-ribosyl)imidazole + ADP + phosphate + H(+). The protein operates within purine metabolism; IMP biosynthesis via de novo pathway; 5-amino-1-(5-phospho-D-ribosyl)imidazole from N(2)-formyl-N(1)-(5-phospho-D-ribosyl)glycinamide: step 2/2. The polypeptide is Phosphoribosylformylglycinamidine cyclo-ligase (Pseudomonas fluorescens (strain ATCC BAA-477 / NRRL B-23932 / Pf-5)).